A 597-amino-acid polypeptide reads, in one-letter code: Alkyldihydroxyacetonephosphate synthase (597 aa).

The region spanning Ile131–Ile313 is the FAD-binding PCMH-type domain. FAD contacts are provided by residues Pro163 to Ser169, Asp232 to Thr238, Thr245 to Ser248, and Glu297 to Val303. Arg444 lines the substrate pocket. The active-site Proton donor/acceptor is Tyr507. The important for enzyme activity stretch occupies residues His544–His546. The Microbody targeting signal signature appears at Cys595–Leu597.

This sequence belongs to the FAD-binding oxidoreductase/transferase type 4 family. As to quaternary structure, homodimer. It depends on FAD as a cofactor.

It is found in the peroxisome. It carries out the reaction a long chain fatty alcohol + a 1-acylglycerone 3-phosphate = a 1-O-alkylglycerone 3-phosphate + a long-chain fatty acid + H(+). Its pathway is glycerolipid metabolism; ether lipid biosynthesis. In terms of biological role, catalyzes the exchange of an acyl for a long-chain alkyl group and the formation of the ether bond in the biosynthesis of ether phospholipids. This chain is Alkyldihydroxyacetonephosphate synthase (ads-1), found in Caenorhabditis elegans.